Reading from the N-terminus, the 191-residue chain is Cell division protein SepF (191 aa).

A compositionally biased stretch (low complexity) spans 151–165 (SSSPEEASPSSVPTE). Residues 151 to 191 (SSSPEEASPSSVPTENTPQYSLGKNTTPEPAWGNSKLSAYS) are disordered. Polar residues predominate over residues 166–178 (NTPQYSLGKNTTP).

This sequence belongs to the SepF family. As to quaternary structure, homodimer. Interacts with FtsZ.

The protein localises to the cytoplasm. Its function is as follows. Cell division protein that is part of the divisome complex and is recruited early to the Z-ring. Probably stimulates Z-ring formation, perhaps through the cross-linking of FtsZ protofilaments. Its function overlaps with FtsA. In Prochlorococcus marinus (strain MIT 9215), this protein is Cell division protein SepF.